Reading from the N-terminus, the 307-residue chain is Methionyl-tRNA formyltransferase (307 aa).

Residue 108 to 111 (SLLP) participates in (6S)-5,6,7,8-tetrahydrofolate binding.

The protein belongs to the Fmt family.

It carries out the reaction L-methionyl-tRNA(fMet) + (6R)-10-formyltetrahydrofolate = N-formyl-L-methionyl-tRNA(fMet) + (6S)-5,6,7,8-tetrahydrofolate + H(+). Functionally, attaches a formyl group to the free amino group of methionyl-tRNA(fMet). The formyl group appears to play a dual role in the initiator identity of N-formylmethionyl-tRNA by promoting its recognition by IF2 and preventing the misappropriation of this tRNA by the elongation apparatus. The polypeptide is Methionyl-tRNA formyltransferase (Stenotrophomonas maltophilia (strain R551-3)).